The chain runs to 341 residues: Protein huluwa (341 aa).

Residues 1–36 (MVTLSPAYLPSDGGTQAASAAPSVEENWVVQPSLTL) are Extracellular-facing. A helical membrane pass occupies residues 37–57 (LVLLLVPCVLLLFFLNCFLLF). At 58–341 (HRLPAFSLRK…PMMCSKQYWI (284 aa)) the chain is on the cytoplasmic side. Residues 206-211 (VPPNTP) carry the VPPNSP motif motif.

This sequence belongs to the huluwa family. Interacts with axin1; leading to promote the tankyrase-mediated degradation of axin. Interacts with axin2; leading to promote the tankyrase-mediated degradation of axin.

Its subcellular location is the cell membrane. Its function is as follows. Key maternal determinant of the dorsal organizer and body axis formation in vertebrates that acts by promoting stabilization of beta-catenin (ctnnb1). Localizes on the plasma membrane of the future dorsal blastomeres in early blastulas and binds to and promotes the tankyrase-mediated degradation of axin (axin1 and axin2). Axin degradation results in stabilization and nuclear translocation of beta-catenin (ctnnb1) for activating organizer-specific target gene expression. The sequence is that of Protein huluwa from Xenopus laevis (African clawed frog).